Reading from the N-terminus, the 106-residue chain is Nucleoid-associated protein BRADO0764 (106 aa).

It belongs to the YbaB/EbfC family. As to quaternary structure, homodimer.

Its subcellular location is the cytoplasm. The protein localises to the nucleoid. Functionally, binds to DNA and alters its conformation. May be involved in regulation of gene expression, nucleoid organization and DNA protection. The polypeptide is Nucleoid-associated protein BRADO0764 (Bradyrhizobium sp. (strain ORS 278)).